A 119-amino-acid polypeptide reads, in one-letter code: Large ribosomal subunit protein uL18 (119 aa).

The protein belongs to the universal ribosomal protein uL18 family. In terms of assembly, part of the 50S ribosomal subunit; part of the 5S rRNA/L5/L18/L25 subcomplex. Contacts the 5S and 23S rRNAs.

Functionally, this is one of the proteins that bind and probably mediate the attachment of the 5S RNA into the large ribosomal subunit, where it forms part of the central protuberance. This chain is Large ribosomal subunit protein uL18, found in Dinoroseobacter shibae (strain DSM 16493 / NCIMB 14021 / DFL 12).